Reading from the N-terminus, the 595-residue chain is MLQPWSEIAPRLVDVAMGRKPADLVVRNGRWVNVYSGEIVPGADIAIVGGRFAYVGPDAGHTIGEGTKIVDAAGRYLVPGLCDGHMHVESGLVTVTEFARAVIPHGTTTMFVDPHEIANVLGIAGVKLMNDEAQTLPVNIFVQVPSCVPSAPGLENAGATLSAADVREALAWPNIIGLGEMMNFPGVAANDSKMVAEIAATRAAGLTVGGHYASPDLGRAFHAYAAGGPADDHEGTTVEDAIARVRQGMRSMLRLGSAWFDVAAQVKAITERGIDPRNFVLCTDDSHSGTLVSDGHMNRVVRHAISQGLKPITAIQMATLNTAQHFGLERDLGSIAPGRRADLIVTSDLTALPIEIVFVRGRLLAEKGVLVADIPAYDYPASAKNTVKLGKRLAPTDFDICAAGSSEVEVRVIGVIENQAPTKALQRRLPVECGVVQMDRASDVCQIALVERHRATGGVINAFVSGFGYDTHCAMASTVAHDSHHMIVVGTNKADMAQAANRLQEVGGGIVLIAGGRELALVELPVAGLMSDQRAEIVAEKASRLVEAMRACGCKLNNAYMQHSLLALVVIPELRISDVGLIDVTRFESTEVIVR.

It belongs to the metallo-dependent hydrolases superfamily. Adenine deaminase family. The cofactor is Mn(2+).

It carries out the reaction adenine + H2O + H(+) = hypoxanthine + NH4(+). The polypeptide is Adenine deaminase 3 (Rhizobium meliloti (strain 1021) (Ensifer meliloti)).